Here is a 224-residue protein sequence, read N- to C-terminus: Ribonuclease HII (224 aa).

In terms of domain architecture, RNase H type-2 spans arginine 21–glutamine 223. A divalent metal cation-binding residues include aspartate 27, glutamate 28, and aspartate 124.

The protein belongs to the RNase HII family. Mn(2+) serves as cofactor. Requires Mg(2+) as cofactor.

The protein resides in the cytoplasm. It carries out the reaction Endonucleolytic cleavage to 5'-phosphomonoester.. Endonuclease that specifically degrades the RNA of RNA-DNA hybrids. This is Ribonuclease HII from Roseiflexus castenholzii (strain DSM 13941 / HLO8).